The following is a 181-amino-acid chain: Adenine phosphoribosyltransferase (181 aa).

This sequence belongs to the purine/pyrimidine phosphoribosyltransferase family. As to quaternary structure, homodimer.

The protein localises to the cytoplasm. The catalysed reaction is AMP + diphosphate = 5-phospho-alpha-D-ribose 1-diphosphate + adenine. It functions in the pathway purine metabolism; AMP biosynthesis via salvage pathway; AMP from adenine: step 1/1. In terms of biological role, catalyzes a salvage reaction resulting in the formation of AMP, that is energically less costly than de novo synthesis. The chain is Adenine phosphoribosyltransferase from Rhodopseudomonas palustris (strain ATCC BAA-98 / CGA009).